Reading from the N-terminus, the 195-residue chain is Transmembrane protein 126A (195 aa).

The Mitochondrial matrix portion of the chain corresponds to 1 to 33 (MENHKSNNKENITIVDISRKINQLPEAERNLLE). The chain crosses the membrane as a helical span at residues 34 to 54 (NGSVYVGLNAALCGLIANSLF). At 55–56 (RR) the chain is on the mitochondrial intermembrane side. The helical transmembrane segment at 57–77 (ILNVTKARIAAGLPMAGIPFL) threads the bilayer. Residues 78–110 (TTDLTYRCFVSFPLNTGDLDCETCTITRSGLTG) are Mitochondrial matrix-facing. Residues 111–131 (LVIGGLYPVFLAIPVNGGLAA) traverse the membrane as a helical segment. Residues 132–158 (RYQSALLPHKGNILSYWIRTSKPVFRK) lie on the Mitochondrial intermembrane side of the membrane. The helical transmembrane segment at 159–175 (MLFPILLQTMFSAYLGS) threads the bilayer. Over 176–195 (EQYKLLIKALQLSEPGKEIH) the chain is Mitochondrial matrix.

The protein belongs to the TMEM126 family. Interacts with OXA1L; promoting cotranslational quality control in mitochondria. In terms of tissue distribution, strongly expressed in brain, cerebellum, skeletal muscle, testis. High expression also found in fetal brain, fetal retinal pigmentary epithelium, and fetal retina. Highly expressed in retinal ganglion cells.

It localises to the mitochondrion inner membrane. Functionally, protein required for the cotranslational protein quality control in the inner membrane of the mitochondria. Associates with newly synthesized polypeptides and may act as a chaperone that cooperates with OXA1L for the insertion of newly synthesized mitochondrial proteins into the inner membrane. Required for the assembly of the ND4 module of mitochondrial complex I. This chain is Transmembrane protein 126A, found in Homo sapiens (Human).